Here is a 228-residue protein sequence, read N- to C-terminus: Heptaprenylglyceryl phosphate synthase (228 aa).

Lys12 provides a ligand contact to sn-glycerol 1-phosphate. Mg(2+) contacts are provided by Asp14 and Ser40. Sn-glycerol 1-phosphate contacts are provided by residues 158-163 (YLEYSG), Gly188, and 208-209 (GN).

The protein belongs to the GGGP/HepGP synthase family. Group I subfamily. As to quaternary structure, homodimer. Requires Mg(2+) as cofactor.

It carries out the reaction sn-glycerol 1-phosphate + all-trans-heptaprenyl diphosphate = 3-heptaprenyl-sn-glycero-1-phosphate + diphosphate. Its pathway is membrane lipid metabolism; glycerophospholipid metabolism. Functionally, prenyltransferase that catalyzes in vivo the transfer of the heptaprenyl moiety of heptaprenyl pyrophosphate (HepPP; 35 carbon atoms) to the C3 hydroxyl of sn-glycerol-1-phosphate (G1P), producing heptaprenylglyceryl phosphate (HepGP). This reaction is an ether-bond-formation step in the biosynthesis of archaea-type G1P-based membrane lipids found in Bacillales. To a much lesser extent, is also able to use geranyl diphosphate (GPP; C10) and geranylgeranyl diphosphate (GGPP; C20) as the prenyl donors, but not farnesyl pyrophosphate (FPP; C15). Cannot use glycerol-3-phosphate (G3P) or 3-phosphoglycerate (3PG) as an acceptor. This is Heptaprenylglyceryl phosphate synthase from Bacillus subtilis (strain 168).